Reading from the N-terminus, the 160-residue chain is Calcium and integrin-binding family member 3 (160 aa).

3 consecutive EF-hand domains span residues lysine 39–methionine 74, proline 76–glycine 111, and glutamate 117–phenylalanine 152. Ca(2+) is bound by residues aspartate 89, asparagine 91, aspartate 93, tyrosine 95, aspartate 100, aspartate 130, aspartate 132, aspartate 134, arginine 136, and aspartate 141.

Monomer and homodimer. Interacts with ITGA2B (via C-terminus cytoplasmic tail region); the interaction is stabilized/increased in a calcium and magnesium-dependent manner. Interacts with TMC1. In terms of tissue distribution, expressed in heart, liver and inner ear. In the inner ear, expressed in vestibule and basilar membrane cells. Expressed in megakaryocytes and endothelial cells.

Functionally, acts as an auxiliary subunit of the sensory mechanoelectrical transduction (MET) channel in hair cells. Plays a role in regulating hair cell MET channel localization and function. In Mus musculus (Mouse), this protein is Calcium and integrin-binding family member 3 (Cib3).